A 417-amino-acid chain; its full sequence is Gamma-glutamyl phosphate reductase (417 aa).

It belongs to the gamma-glutamyl phosphate reductase family.

The protein localises to the cytoplasm. The catalysed reaction is L-glutamate 5-semialdehyde + phosphate + NADP(+) = L-glutamyl 5-phosphate + NADPH + H(+). The protein operates within amino-acid biosynthesis; L-proline biosynthesis; L-glutamate 5-semialdehyde from L-glutamate: step 2/2. Functionally, catalyzes the NADPH-dependent reduction of L-glutamate 5-phosphate into L-glutamate 5-semialdehyde and phosphate. The product spontaneously undergoes cyclization to form 1-pyrroline-5-carboxylate. This is Gamma-glutamyl phosphate reductase from Escherichia coli O81 (strain ED1a).